A 171-amino-acid polypeptide reads, in one-letter code: 3-hydroxyanthranilate 3,4-dioxygenase (171 aa).

Residue Arg-44 coordinates O2. Fe cation contacts are provided by His-48, Glu-54, and His-92. Glu-54 is a binding site for substrate. Residues Arg-96 and Glu-106 each coordinate substrate. Cys-121, Cys-126, Cys-160, and Cys-163 together coordinate a divalent metal cation.

This sequence belongs to the 3-HAO family. Fe(2+) is required as a cofactor.

Its subcellular location is the cytoplasm. It catalyses the reaction 3-hydroxyanthranilate + O2 = (2Z,4Z)-2-amino-3-carboxymuconate 6-semialdehyde. It participates in cofactor biosynthesis; NAD(+) biosynthesis; quinolinate from L-kynurenine: step 3/3. Functionally, catalyzes the oxidative ring opening of 3-hydroxyanthranilate to 2-amino-3-carboxymuconate semialdehyde, which spontaneously cyclizes to quinolinate. The sequence is that of 3-hydroxyanthranilate 3,4-dioxygenase from Yarrowia lipolytica (strain CLIB 122 / E 150) (Yeast).